We begin with the raw amino-acid sequence, 1247 residues long: Protein jagged-2 (1247 aa).

The first 23 residues, 1-23, serve as a signal peptide directing secretion; that stretch reads MRARGWGRLPRRLLLLLVLCVQA. Topologically, residues 24 to 1082 are extracellular; it reads TRPMGYFELQ…ETVVMGGSST (1059 aa). A glycan (N-linked (GlcNAc...) asparagine) is linked at asparagine 153. The region spanning 196–240 is the DSL domain; that stretch reads VRCDENYYSATCNKFCRPRNDFFGHYTCDQYGNKACMDGWMGKEC. 42 disulfide bridges follow: cysteine 198-cysteine 207, cysteine 211-cysteine 223, cysteine 231-cysteine 240, cysteine 245-cysteine 256, cysteine 249-cysteine 262, cysteine 264-cysteine 273, cysteine 276-cysteine 287, cysteine 282-cysteine 293, cysteine 295-cysteine 304, cysteine 311-cysteine 323, cysteine 317-cysteine 333, cysteine 335-cysteine 344, cysteine 351-cysteine 362, cysteine 356-cysteine 371, cysteine 373-cysteine 382, cysteine 389-cysteine 400, cysteine 394-cysteine 409, cysteine 411-cysteine 420, cysteine 427-cysteine 438, cysteine 432-cysteine 447, cysteine 449-cysteine 458, cysteine 465-cysteine 475, cysteine 469-cysteine 484, cysteine 486-cysteine 495, cysteine 502-cysteine 513, cysteine 507-cysteine 522, cysteine 524-cysteine 533, cysteine 540-cysteine 551, cysteine 545-cysteine 560, cysteine 562-cysteine 571, cysteine 589-cysteine 612, cysteine 606-cysteine 622, cysteine 624-cysteine 633, cysteine 640-cysteine 651, cysteine 645-cysteine 660, cysteine 662-cysteine 671, cysteine 678-cysteine 689, cysteine 683-cysteine 698, cysteine 700-cysteine 709, cysteine 716-cysteine 727, cysteine 721-cysteine 736, and cysteine 738-cysteine 747. The 34-residue stretch at 241 to 274 folds into the EGF-like 1 domain; sequence KEAVCKQGCNLLHGGCTVPGECRCSYGWQGKFCD. One can recognise an EGF-like 2; atypical domain in the interval 275–305; it reads ECVPYPGCVHGSCVEPWHCDCETNWGGLLCD. EGF-like domains follow at residues 307–345 and 347–383; these read DLNYCGSHHPCVNGGTCINAEPDQYLCACPDGYLGKNCE and AEHACASNPCANGGSCHEVPSGFECHCPSGWNGPTCA. The EGF-like 5; calcium-binding domain maps to 385–421; it reads DIDECASNPCAAGGTCVDQVDGFECICPEQWVGATCQ. In terms of domain architecture, EGF-like 6; calcium-binding spans 423–459; sequence DANECEGKPCLNAFSCKNLIGGYYCDCLPGWKGINCQ. The 36-residue stretch at 461–496 folds into the EGF-like 7; calcium-binding domain; it reads NINDCHGQCQHGGTCKDLVNGYQCVCPRGFGGRHCE. EGF-like domains follow at residues 498–534 and 536–572; these read EYDKCASSPCRRGGICEDLVDGFRCHCPRGLSGLHCE and DMDLCEPSPCLNGARCYNLEGDYYCACPEDFGGKNCS. The N-linked (GlcNAc...) asparagine glycan is linked to asparagine 570. In terms of domain architecture, EGF-like 10; atypical spans 574–634; the sequence is PRDTCPGGAC…DSGFTGTYCH (61 aa). Asparagine 619 is a glycosylation site (N-linked (GlcNAc...) asparagine). The EGF-like 11; calcium-binding domain occupies 636-672; the sequence is NIDDCMGQPCRNGGTCIDEVDSFRCFCPSGWEGELCD. Residues 674–710 form the EGF-like 12; calcium-binding domain; that stretch reads NPNDCLPDPCHSRGRCYDLVNDFYCACDDGWKGKTCH. EGF-like domains are found at residues 712 to 748 and 751 to 787; these read REFQCDAYTCSNGGTCYDSGDTFRCACPPGWKGSTCT and KNSSCVPNPCVNGGTCVGSGDSFSCICRDGWEGRTCT. An N-linked (GlcNAc...) asparagine glycan is attached at asparagine 752. Cystine bridges form between cysteine 755-cysteine 766, cysteine 760-cysteine 775, cysteine 777-cysteine 786, cysteine 793-cysteine 804, cysteine 798-cysteine 813, cysteine 815-cysteine 824, cysteine 831-cysteine 842, cysteine 836-cysteine 851, and cysteine 853-cysteine 862. One can recognise an EGF-like 15; calcium-binding domain in the interval 789–825; that stretch reads NTNDCNPLPCYNGGICVDGVNWFRCECAPGFAGPDCR. One can recognise an EGF-like 16; calcium-binding domain in the interval 827–863; the sequence is NIDECQSSPCAYGATCVDEINGYRCSCPPGRSGPRCQ. Asparagine 1060 carries an N-linked (GlcNAc...) asparagine glycan. The chain crosses the membrane as a helical span at residues 1083–1103; it reads GLLVPVLCSVFSVLWLACVVI. Residues 1104-1247 lie on the Cytoplasmic side of the membrane; the sequence is CVWWTRKRRK…TKDVRRAGRE (144 aa). Basic and acidic residues-rich tracts occupy residues 1115-1125, 1192-1212, and 1230-1247; these read RERSRLPRDES, LSRGDGDSPEAEKFISHKFTK, and VDNRAVRSTKDVRRAGRE. Disordered regions lie at residues 1115–1148 and 1167–1247; these read RERSRLPRDESANNQWAPLNPIRNPIERPGGSGL and PRRA…AGRE. A Phosphoserine modification is found at serine 1125.

In terms of tissue distribution, found to be highest in fetal thymus, epidermis, foregut dorsal root ganglia and inner ear. In 2-weeK-old mice, abundant in heart, lung, thymus, skeletal muscle, brain and testis. Expression overlaps partially with Notch1 expression.

It is found in the membrane. In terms of biological role, putative Notch ligand involved in the mediation of Notch signaling. Plays an essential role during limb, craniofacial and thymic development. May be involved in myogenesis and in the development of peripheral and central nervous systems. The protein is Protein jagged-2 (Jag2) of Mus musculus (Mouse).